Here is a 161-residue protein sequence, read N- to C-terminus: Regulator of ribonuclease activity A (161 aa).

This sequence belongs to the RraA family. In terms of assembly, homotrimer. Binds to both RNA-binding sites in the C-terminal region of Rne and to RhlB.

The protein resides in the cytoplasm. Its function is as follows. Globally modulates RNA abundance by binding to RNase E (Rne) and regulating its endonucleolytic activity. Can modulate Rne action in a substrate-dependent manner by altering the composition of the degradosome. Modulates RNA-binding and helicase activities of the degradosome. The sequence is that of Regulator of ribonuclease activity A from Shewanella denitrificans (strain OS217 / ATCC BAA-1090 / DSM 15013).